Reading from the N-terminus, the 360-residue chain is Phospho-N-acetylmuramoyl-pentapeptide-transferase (360 aa).

The Periplasmic portion of the chain corresponds to 1 to 25 (MLVWLAEHLVKYYSGFNVFSYLTFR). The chain crosses the membrane as a helical span at residues 26 to 46 (AIVSLLTALFISLWMGPRMIA). The Cytoplasmic portion of the chain corresponds to 47-71 (RLQKLSFGQVVRNDGPESHFSKRGT). A helical transmembrane segment spans residues 72 to 92 (PTMGGIMILTAIVISVLLWAY). A topological domain (periplasmic) is located at residue Pro93. Residues 94-114 (SNPYVWCVLVVLIGYGIIGFV) form a helical membrane-spanning segment. The Cytoplasmic portion of the chain corresponds to 115 to 131 (DDYRKVVRKDTKGLIAR). Residues 132–152 (WKYFWMSVIALGVAFALYLVG) form a helical membrane-spanning segment. Residues 153–167 (KDTPATQLVVPFFKD) lie on the Periplasmic side of the membrane. Residues 168 to 188 (VMPQLGLFYILLSYFVIVGTG) form a helical membrane-spanning segment. Over 189 to 198 (NAVNLTDGLD) the chain is Cytoplasmic. The chain crosses the membrane as a helical span at residues 199 to 219 (GLAIMPTVFVAAGFALVAWAT). Residues 220–235 (GNMNFANYLHIPYLRH) lie on the Periplasmic side of the membrane. The chain crosses the membrane as a helical span at residues 236 to 256 (AGELVIVCTAIVGAGLGFLWF). Topologically, residues 257 to 262 (NTYPAQ) are cytoplasmic. A helical transmembrane segment spans residues 263–283 (VFMGDVGSLALGGALGIIAVL). Topologically, residues 284-287 (LRQE) are periplasmic. Residues 288–308 (FLLVIMGGVFVVETLSVILQV) traverse the membrane as a helical segment. The Cytoplasmic segment spans residues 309–337 (GSFKLRGQRIFRMAPIHHHYELKGWPEPR). A helical membrane pass occupies residues 338 to 358 (VIVRFWIISLMLVLIGLATLK). At 359–360 (VR) the chain is on the periplasmic side.

This sequence belongs to the glycosyltransferase 4 family. MraY subfamily. The cofactor is Mg(2+).

The protein resides in the cell inner membrane. It catalyses the reaction UDP-N-acetyl-alpha-D-muramoyl-L-alanyl-gamma-D-glutamyl-meso-2,6-diaminopimeloyl-D-alanyl-D-alanine + di-trans,octa-cis-undecaprenyl phosphate = di-trans,octa-cis-undecaprenyl diphospho-N-acetyl-alpha-D-muramoyl-L-alanyl-D-glutamyl-meso-2,6-diaminopimeloyl-D-alanyl-D-alanine + UMP. It participates in cell wall biogenesis; peptidoglycan biosynthesis. Catalyzes the initial step of the lipid cycle reactions in the biosynthesis of the cell wall peptidoglycan: transfers peptidoglycan precursor phospho-MurNAc-pentapeptide from UDP-MurNAc-pentapeptide onto the lipid carrier undecaprenyl phosphate, yielding undecaprenyl-pyrophosphoryl-MurNAc-pentapeptide, known as lipid I. This Salmonella agona (strain SL483) protein is Phospho-N-acetylmuramoyl-pentapeptide-transferase.